Consider the following 639-residue polypeptide: Chaperone protein HtpG (639 aa).

Residues 1-348 (MAQYEFQTEV…SEDLPLNVSR (348 aa)) are a; substrate-binding. The interval 349–565 (EILQQNRVLA…ENDPTVQMER (217 aa)) is b. A c region spans residues 566 to 639 (LMRATGQTHK…KRVNRLLARG (74 aa)).

This sequence belongs to the heat shock protein 90 family. In terms of assembly, homodimer.

It localises to the cytoplasm. Its function is as follows. Molecular chaperone. Has ATPase activity. The sequence is that of Chaperone protein HtpG from Treponema pallidum (strain Nichols).